The chain runs to 278 residues: Aliphatic sulfonates import ATP-binding protein SsuB (278 aa).

Positions 15-236 constitute an ABC transporter domain; sequence LVLRDLSKRF…SQGDAAFAAL (222 aa). 47–54 contributes to the ATP binding site; sequence GRSGCGKS. Positions 251–264 are enriched in basic and acidic residues; it reads PERESFTHPNDGEP. A disordered region spans residues 251–278; sequence PERESFTHPNDGEPRWPGVPAHGVRWAV.

Belongs to the ABC transporter superfamily. Aliphatic sulfonates importer (TC 3.A.1.17.2) family. The complex is composed of two ATP-binding proteins (SsuB), two transmembrane proteins (SsuC) and a solute-binding protein (SsuA).

It is found in the cell inner membrane. It carries out the reaction ATP + H2O + aliphatic sulfonate-[sulfonate-binding protein]Side 1 = ADP + phosphate + aliphatic sulfonateSide 2 + [sulfonate-binding protein]Side 1.. Part of the ABC transporter complex SsuABC involved in aliphatic sulfonates import. Responsible for energy coupling to the transport system. This Albidiferax ferrireducens (strain ATCC BAA-621 / DSM 15236 / T118) (Rhodoferax ferrireducens) protein is Aliphatic sulfonates import ATP-binding protein SsuB.